A 145-amino-acid chain; its full sequence is D-aminoacyl-tRNA deacylase (145 aa).

A Gly-cisPro motif, important for rejection of L-amino acids motif is present at residues 137–138; the sequence is GP.

This sequence belongs to the DTD family. In terms of assembly, homodimer.

The protein localises to the cytoplasm. The catalysed reaction is glycyl-tRNA(Ala) + H2O = tRNA(Ala) + glycine + H(+). It catalyses the reaction a D-aminoacyl-tRNA + H2O = a tRNA + a D-alpha-amino acid + H(+). An aminoacyl-tRNA editing enzyme that deacylates mischarged D-aminoacyl-tRNAs. Also deacylates mischarged glycyl-tRNA(Ala), protecting cells against glycine mischarging by AlaRS. Acts via tRNA-based rather than protein-based catalysis; rejects L-amino acids rather than detecting D-amino acids in the active site. By recycling D-aminoacyl-tRNA to D-amino acids and free tRNA molecules, this enzyme counteracts the toxicity associated with the formation of D-aminoacyl-tRNA entities in vivo and helps enforce protein L-homochirality. This is D-aminoacyl-tRNA deacylase from Salmonella paratyphi A (strain AKU_12601).